Consider the following 193-residue polypeptide: Probable nicotinate-nucleotide adenylyltransferase (193 aa).

This sequence belongs to the NadD family.

The catalysed reaction is nicotinate beta-D-ribonucleotide + ATP + H(+) = deamido-NAD(+) + diphosphate. It functions in the pathway cofactor biosynthesis; NAD(+) biosynthesis; deamido-NAD(+) from nicotinate D-ribonucleotide: step 1/1. Catalyzes the reversible adenylation of nicotinate mononucleotide (NaMN) to nicotinic acid adenine dinucleotide (NaAD). The protein is Probable nicotinate-nucleotide adenylyltransferase of Borreliella afzelii (strain PKo) (Borrelia afzelii).